The following is a 141-amino-acid chain: Phosphoribosyl-AMP cyclohydrolase (141 aa).

D91 serves as a coordination point for Mg(2+). C92 lines the Zn(2+) pocket. Mg(2+)-binding residues include D93 and D95. Positions 110 and 117 each coordinate Zn(2+).

This sequence belongs to the PRA-CH family. As to quaternary structure, homodimer. Requires Mg(2+) as cofactor. Zn(2+) is required as a cofactor.

The protein localises to the cytoplasm. The enzyme catalyses 1-(5-phospho-beta-D-ribosyl)-5'-AMP + H2O = 1-(5-phospho-beta-D-ribosyl)-5-[(5-phospho-beta-D-ribosylamino)methylideneamino]imidazole-4-carboxamide. It participates in amino-acid biosynthesis; L-histidine biosynthesis; L-histidine from 5-phospho-alpha-D-ribose 1-diphosphate: step 3/9. Its function is as follows. Catalyzes the hydrolysis of the adenine ring of phosphoribosyl-AMP. This is Phosphoribosyl-AMP cyclohydrolase from Brucella anthropi (strain ATCC 49188 / DSM 6882 / CCUG 24695 / JCM 21032 / LMG 3331 / NBRC 15819 / NCTC 12168 / Alc 37) (Ochrobactrum anthropi).